The primary structure comprises 968 residues: Isoleucine--tRNA ligase (968 aa).

The 'HIGH' region signature appears at 68 to 78 (PYANGALHMGH). Glu584 is a binding site for L-isoleucyl-5'-AMP. The 'KMSKS' region motif lies at 625–629 (KMSKS). Lys628 provides a ligand contact to ATP. Zn(2+) contacts are provided by Cys938, Cys941, Cys958, and Cys961.

Belongs to the class-I aminoacyl-tRNA synthetase family. IleS type 1 subfamily. Monomer. The cofactor is Zn(2+).

Its subcellular location is the cytoplasm. The catalysed reaction is tRNA(Ile) + L-isoleucine + ATP = L-isoleucyl-tRNA(Ile) + AMP + diphosphate. Functionally, catalyzes the attachment of isoleucine to tRNA(Ile). As IleRS can inadvertently accommodate and process structurally similar amino acids such as valine, to avoid such errors it has two additional distinct tRNA(Ile)-dependent editing activities. One activity is designated as 'pretransfer' editing and involves the hydrolysis of activated Val-AMP. The other activity is designated 'posttransfer' editing and involves deacylation of mischarged Val-tRNA(Ile). This Synechococcus sp. (strain CC9311) protein is Isoleucine--tRNA ligase.